We begin with the raw amino-acid sequence, 315 residues long: Probable HTH-type transcriptional regulator SinR (315 aa).

The 58-residue stretch at Arg8 to Thr65 folds into the HTH lysR-type domain. Residues Leu25–Ser44 constitute a DNA-binding region (H-T-H motif).

This sequence belongs to the LysR transcriptional regulatory family.

Its function is as follows. Probable regulatory protein. Its target is not known. The sequence is that of Probable HTH-type transcriptional regulator SinR (sinR) from Salmonella typhimurium (strain LT2 / SGSC1412 / ATCC 700720).